The primary structure comprises 695 residues: Zinc finger SWIM domain-containing protein 3 (695 aa).

Residues 434–490 are disordered; the sequence is NAPKLRRTRLPSTPPRPKKPFRICGGGDTRLPVEEVEETKADSAQSQLPQPQDQSSK. Positions 475 to 489 are enriched in low complexity; the sequence is DSAQSQLPQPQDQSS. Residues 530–571 form an SWIM-type zinc finger; it reads VAVQLLENSHQVSKDGCSCSCSFQQCYHLPCRHILALLHTSQ.

The sequence is that of Zinc finger SWIM domain-containing protein 3 (Zswim3) from Mus musculus (Mouse).